A 168-amino-acid chain; its full sequence is Ribosome maturation factor RimM (168 aa).

In terms of domain architecture, PRC barrel spans 93 to 168 (EDEFYQSDLV…IVLNIPEFID (76 aa)).

It belongs to the RimM family. Binds ribosomal protein uS19.

It is found in the cytoplasm. Functionally, an accessory protein needed during the final step in the assembly of 30S ribosomal subunit, possibly for assembly of the head region. Essential for efficient processing of 16S rRNA. May be needed both before and after RbfA during the maturation of 16S rRNA. It has affinity for free ribosomal 30S subunits but not for 70S ribosomes. This is Ribosome maturation factor RimM from Wolbachia pipientis wMel.